The sequence spans 212 residues: FMN-dependent NAD(P)H:quinone oxidoreductase 1 (212 aa).

Residues Ser10, 16-18 (SQS), and 97-100 (MYNF) each bind FMN. 2 residues coordinate substrate: Asn99 and Tyr131. FMN is bound by residues 145–148 (SRGG) and Glu187. Glu188 contacts substrate.

It belongs to the azoreductase type 1 family. As to quaternary structure, homodimer. Homotetramer formed by a dimer of dimers when the ionic strength is high. FMN serves as cofactor.

It carries out the reaction 2 a quinone + NADPH + H(+) = 2 a 1,4-benzosemiquinone + NADP(+). The catalysed reaction is 2 a quinone + NADH + H(+) = 2 a 1,4-benzosemiquinone + NAD(+). It catalyses the reaction N,N-dimethyl-1,4-phenylenediamine + anthranilate + 2 NAD(+) = 2-(4-dimethylaminophenyl)diazenylbenzoate + 2 NADH + 2 H(+). Azoreductase activity increases with salt strength. Quinone reductase that provides resistance to thiol-specific stress caused by electrophilic quinones. Shows a preference for benzoquinones. Functionally, also exhibits azoreductase activity. Catalyzes the reductive cleavage of the azo bond in aromatic azo compounds to the corresponding amines. NADPH is the preferred electron donor for azoreductase activity, but it can also use NADH. Can reduce different classes of azo dyes, including the common azo dyes methyl red and p-aminoazobenzene sulfonamide (PAABSA). Can activate several azo pro-drugs used in the treatment of inflammatory bowel disease (IBD), including balsalazide, sulfasalazine and olsalazine. Also acts as a nitrodeductase, and can reduce and hence activate the nitroaromatic drug nitrofurazone, a broad spectrum antibiotic. The polypeptide is FMN-dependent NAD(P)H:quinone oxidoreductase 1 (Pseudomonas aeruginosa (strain ATCC 15692 / DSM 22644 / CIP 104116 / JCM 14847 / LMG 12228 / 1C / PRS 101 / PAO1)).